Consider the following 285-residue polypeptide: Urease accessory protein UreD (285 aa).

This sequence belongs to the UreD family. As to quaternary structure, ureD, UreF and UreG form a complex that acts as a GTP-hydrolysis-dependent molecular chaperone, activating the urease apoprotein by helping to assemble the nickel containing metallocenter of UreC. The UreE protein probably delivers the nickel.

Its subcellular location is the cytoplasm. Required for maturation of urease via the functional incorporation of the urease nickel metallocenter. In Cenarchaeum symbiosum (strain A), this protein is Urease accessory protein UreD.